Here is a 362-residue protein sequence, read N- to C-terminus: tRNA 2-selenouridine synthase (362 aa).

The 124-residue stretch at 12 to 135 (FLNDTPLLDV…LRRFLIDEME (124 aa)) folds into the Rhodanese domain. C95 acts as the S-selanylcysteine intermediate in catalysis.

The protein belongs to the SelU family. Monomer.

It carries out the reaction 5-methylaminomethyl-2-thiouridine(34) in tRNA + selenophosphate + (2E)-geranyl diphosphate + H2O + H(+) = 5-methylaminomethyl-2-selenouridine(34) in tRNA + (2E)-thiogeraniol + phosphate + diphosphate. It catalyses the reaction 5-methylaminomethyl-2-thiouridine(34) in tRNA + (2E)-geranyl diphosphate = 5-methylaminomethyl-S-(2E)-geranyl-thiouridine(34) in tRNA + diphosphate. The enzyme catalyses 5-methylaminomethyl-S-(2E)-geranyl-thiouridine(34) in tRNA + selenophosphate + H(+) = 5-methylaminomethyl-2-(Se-phospho)selenouridine(34) in tRNA + (2E)-thiogeraniol. The catalysed reaction is 5-methylaminomethyl-2-(Se-phospho)selenouridine(34) in tRNA + H2O = 5-methylaminomethyl-2-selenouridine(34) in tRNA + phosphate. In terms of biological role, involved in the post-transcriptional modification of the uridine at the wobble position (U34) of tRNA(Lys), tRNA(Glu) and tRNA(Gln). Catalyzes the conversion of 2-thiouridine (S2U-RNA) to 2-selenouridine (Se2U-RNA). Acts in a two-step process involving geranylation of 2-thiouridine (S2U) to S-geranyl-2-thiouridine (geS2U) and subsequent selenation of the latter derivative to 2-selenouridine (Se2U) in the tRNA chain. This chain is tRNA 2-selenouridine synthase, found in Alcanivorax borkumensis (strain ATCC 700651 / DSM 11573 / NCIMB 13689 / SK2).